The following is a 430-amino-acid chain: Serine--tRNA ligase (430 aa).

237 to 239 contacts L-serine; that stretch reads TAE. 268-270 contacts ATP; the sequence is RSE. E291 lines the L-serine pocket. 355-358 is an ATP binding site; sequence EISS. S391 provides a ligand contact to L-serine.

This sequence belongs to the class-II aminoacyl-tRNA synthetase family. Type-1 seryl-tRNA synthetase subfamily. In terms of assembly, homodimer. The tRNA molecule binds across the dimer.

The protein resides in the cytoplasm. It catalyses the reaction tRNA(Ser) + L-serine + ATP = L-seryl-tRNA(Ser) + AMP + diphosphate + H(+). The enzyme catalyses tRNA(Sec) + L-serine + ATP = L-seryl-tRNA(Sec) + AMP + diphosphate + H(+). It functions in the pathway aminoacyl-tRNA biosynthesis; selenocysteinyl-tRNA(Sec) biosynthesis; L-seryl-tRNA(Sec) from L-serine and tRNA(Sec): step 1/1. Functionally, catalyzes the attachment of serine to tRNA(Ser). Is also able to aminoacylate tRNA(Sec) with serine, to form the misacylated tRNA L-seryl-tRNA(Sec), which will be further converted into selenocysteinyl-tRNA(Sec). The polypeptide is Serine--tRNA ligase (Salmonella enteritidis PT4 (strain P125109)).